Consider the following 323-residue polypeptide: tRNA U34 carboxymethyltransferase (323 aa).

Residues Lys-90, Trp-104, Lys-109, Gly-129, 182-183, Met-197, Tyr-201, and Arg-316 each bind carboxy-S-adenosyl-L-methionine; that span reads IE.

The protein belongs to the class I-like SAM-binding methyltransferase superfamily. CmoB family. Homotetramer.

It carries out the reaction carboxy-S-adenosyl-L-methionine + 5-hydroxyuridine(34) in tRNA = 5-carboxymethoxyuridine(34) in tRNA + S-adenosyl-L-homocysteine + H(+). Its function is as follows. Catalyzes carboxymethyl transfer from carboxy-S-adenosyl-L-methionine (Cx-SAM) to 5-hydroxyuridine (ho5U) to form 5-carboxymethoxyuridine (cmo5U) at position 34 in tRNAs. This chain is tRNA U34 carboxymethyltransferase, found in Idiomarina loihiensis (strain ATCC BAA-735 / DSM 15497 / L2-TR).